The chain runs to 380 residues: Cytochrome b (380 aa).

4 helical membrane-spanning segments follow: residues 33–53 (FGSL…FLAM), 77–98 (WTIR…FLHI), 113–133 (WNIG…GYVL), and 178–198 (FFTF…LHLL). H83 and H97 together coordinate heme b. The heme b site is built by H182 and H196. H201 contacts a ubiquinone. The next 4 helical transmembrane spans lie at 226 to 246 (IKDI…TLFS), 288 to 308 (LGGV…PILH), 320 to 340 (LSQL…WIGG), and 347 to 367 (FITI…FLMP).

Belongs to the cytochrome b family. As to quaternary structure, the cytochrome bc1 complex contains 11 subunits: 3 respiratory subunits (MT-CYB, CYC1 and UQCRFS1), 2 core proteins (UQCRC1 and UQCRC2) and 6 low-molecular weight proteins (UQCRH/QCR6, UQCRB/QCR7, UQCRQ/QCR8, UQCR10/QCR9, UQCR11/QCR10 and a cleavage product of UQCRFS1). This cytochrome bc1 complex then forms a dimer. It depends on heme b as a cofactor.

It localises to the mitochondrion inner membrane. In terms of biological role, component of the ubiquinol-cytochrome c reductase complex (complex III or cytochrome b-c1 complex) that is part of the mitochondrial respiratory chain. The b-c1 complex mediates electron transfer from ubiquinol to cytochrome c. Contributes to the generation of a proton gradient across the mitochondrial membrane that is then used for ATP synthesis. In Gorilla gorilla gorilla (Western lowland gorilla), this protein is Cytochrome b (MT-CYB).